A 209-amino-acid chain; its full sequence is MTIEIPPTQGVLLAGGLARRMGGGDKPMRTIGGSTILERVIARLKPQCDGIILNANGDPGRFAMFGLTVVADNVPDFPGPLAGILAALDWTATNRPGVEWVLSAAADCPFLPRDLVMRLHQGRAEEKAQLAVAVSGEQSHPVIGLWHVGLREELRRALVKDDIRKIDRWTACYRLAAVSWPTEPLDPFFNANTVEDIAEAERLAALDGG.

Residues 13-15 (LAG), K26, N54, D72, and D107 contribute to the GTP site. D107 provides a ligand contact to Mg(2+).

Belongs to the MobA family. As to quaternary structure, monomer. Mg(2+) serves as cofactor.

The protein resides in the cytoplasm. It carries out the reaction Mo-molybdopterin + GTP + H(+) = Mo-molybdopterin guanine dinucleotide + diphosphate. Functionally, transfers a GMP moiety from GTP to Mo-molybdopterin (Mo-MPT) cofactor (Moco or molybdenum cofactor) to form Mo-molybdopterin guanine dinucleotide (Mo-MGD) cofactor. The polypeptide is Molybdenum cofactor guanylyltransferase (Nitrobacter hamburgensis (strain DSM 10229 / NCIMB 13809 / X14)).